The chain runs to 71 residues: Gas vesicle protein A (71 aa).

The protein belongs to the gas vesicle GvpA family. The gas vesicle shell is 2 nm thick and consists of a single layer of this protein. It forms helical ribs nearly perpendicular to the long axis of the vesicle.

The protein resides in the gas vesicle shell. Functionally, gas vesicles are hollow, gas filled proteinaceous nanostructures found in some microorganisms. During planktonic growth they allow positioning of the organism at a favorable depth for light or nutrient acquisition. GvpA forms the protein shell. Its function is as follows. Cluster expression in E.coli (gvpA1-gvpA2-gvpC-gvpN-gvpJ-gvpK-gvpF-gvpG-gvpV-gvpW) allows cells to float and produces irregularly shaped gas vesicles. The polypeptide is Gas vesicle protein A (Nostoc sp. (strain PCC 7120 / SAG 25.82 / UTEX 2576)).